We begin with the raw amino-acid sequence, 526 residues long: Peptide chain release factor 3 (526 aa).

In terms of domain architecture, tr-type G spans aspartate 9–glutamine 277. GTP contacts are provided by residues serine 18–threonine 25, aspartate 86–histidine 90, and asparagine 140–aspartate 143.

Belongs to the TRAFAC class translation factor GTPase superfamily. Classic translation factor GTPase family. PrfC subfamily.

It is found in the cytoplasm. In terms of biological role, increases the formation of ribosomal termination complexes and stimulates activities of RF-1 and RF-2. It binds guanine nucleotides and has strong preference for UGA stop codons. It may interact directly with the ribosome. The stimulation of RF-1 and RF-2 is significantly reduced by GTP and GDP, but not by GMP. The sequence is that of Peptide chain release factor 3 from Shewanella woodyi (strain ATCC 51908 / MS32).